Here is a 555-residue protein sequence, read N- to C-terminus: Serine/threonine-protein kinase AGC1-7 (555 aa).

The interval 1–126 is disordered; it reads MLTKPGKKLD…PSKPHTGGDI (126 aa). 2 stretches are compositionally biased toward basic and acidic residues: residues 7–16 and 35–54; these read KKLDSSESTH and PRKEMQQKPLFDPKKMDNLI. Positions 84–118 are enriched in low complexity; sequence SQSNLNTKPNNNNSNNNSNMSSRSNSIESTSSNPS. In terms of domain architecture, Protein kinase spans 146–480; the sequence is FRLLKRLGYG…ATEIKQHPFF (335 aa). Residues 152–160 and K175 contribute to the ATP site; that span reads LGYGDIGSV. Catalysis depends on D271, which acts as the Proton acceptor. One can recognise an AGC-kinase C-terminal domain in the interval 481-555; the sequence is EGVNWALIRS…DPDYIDFEYF (75 aa). The segment at 514–547 is disordered; that stretch reads AAVDGGGKKNNNGAGGGCSTGGGDNKPNGDCNDP. A compositionally biased stretch (gly residues) spans 526–537; the sequence is GAGGGCSTGGGD.

It belongs to the protein kinase superfamily. AGC Ser/Thr protein kinase family. In terms of assembly, interacts with PDPK1/PDK1. Autophosphorylated and phosphorylated by PDPK1/PDK1. In terms of tissue distribution, specifically expressed in pollen grains.

It localises to the cytoplasm. It catalyses the reaction L-seryl-[protein] + ATP = O-phospho-L-seryl-[protein] + ADP + H(+). It carries out the reaction L-threonyl-[protein] + ATP = O-phospho-L-threonyl-[protein] + ADP + H(+). With respect to regulation, activated by PDPK1/PDK1. Functions redudantly with AGC1-5 as signaling component in the pollen tube. Required for polarized growth of pollen tubes. In Arabidopsis thaliana (Mouse-ear cress), this protein is Serine/threonine-protein kinase AGC1-7.